A 248-amino-acid chain; its full sequence is Triosephosphate isomerase (248 aa).

9-11 (NWK) contacts substrate. H93 functions as the Electrophile in the catalytic mechanism. Residue E163 is the Proton acceptor of the active site. Substrate contacts are provided by residues G169, S208, and 229–230 (GG).

Belongs to the triosephosphate isomerase family. Homodimer.

The protein resides in the cytoplasm. It carries out the reaction D-glyceraldehyde 3-phosphate = dihydroxyacetone phosphate. It functions in the pathway carbohydrate biosynthesis; gluconeogenesis. The protein operates within carbohydrate degradation; glycolysis; D-glyceraldehyde 3-phosphate from glycerone phosphate: step 1/1. Functionally, involved in the gluconeogenesis. Catalyzes stereospecifically the conversion of dihydroxyacetone phosphate (DHAP) to D-glyceraldehyde-3-phosphate (G3P). The protein is Triosephosphate isomerase of Jannaschia sp. (strain CCS1).